The primary structure comprises 246 residues: Trypsin-5 (246 aa).

The first 15 residues, 1 to 15 (MNSLLFLALVGAAVA), serve as a signal peptide directing secretion. A propeptide spans 16 to 23 (FPVDDDDK) (activation peptide). The 221-residue stretch at 24–244 (IVGGYTCREN…YVDWIQDTIA (221 aa)) folds into the Peptidase S1 domain. Cys-48 and Cys-64 are oxidised to a cystine. Catalysis depends on charge relay system residues His-63 and Asp-107. 3 cysteine pairs are disulfide-bonded: Cys-139–Cys-206, Cys-171–Cys-185, and Cys-196–Cys-220. Catalysis depends on Ser-200, which acts as the Charge relay system.

This sequence belongs to the peptidase S1 family. Proteolytically cleaved and activated by an autocatalytic mechanism. Cleavage by CTRC inhibits autoactivation. As to expression, expressed in the heart, lung, brain, kidney, liver, epididymis, ovary and uterus. Expression in the testis is limited to round and elongating spermatids.

The protein resides in the cytoplasmic vesicle. It localises to the secretory vesicle. It is found in the acrosome. It catalyses the reaction Preferential cleavage: Arg-|-Xaa, Lys-|-Xaa.. Activated by autocatalytic cleavage. Cleavage by CTRC inhibits autoactivation. Its function is as follows. Serine protease capable of autoactivation. This chain is Trypsin-5, found in Mus musculus (Mouse).